The primary structure comprises 257 residues: 3-deoxy-manno-octulosonate cytidylyltransferase (257 aa).

Belongs to the KdsB family.

It is found in the cytoplasm. It carries out the reaction 3-deoxy-alpha-D-manno-oct-2-ulosonate + CTP = CMP-3-deoxy-beta-D-manno-octulosonate + diphosphate. The protein operates within nucleotide-sugar biosynthesis; CMP-3-deoxy-D-manno-octulosonate biosynthesis; CMP-3-deoxy-D-manno-octulosonate from 3-deoxy-D-manno-octulosonate and CTP: step 1/1. It participates in bacterial outer membrane biogenesis; lipopolysaccharide biosynthesis. Activates KDO (a required 8-carbon sugar) for incorporation into bacterial lipopolysaccharide in Gram-negative bacteria. This is 3-deoxy-manno-octulosonate cytidylyltransferase from Xylella fastidiosa (strain M12).